The sequence spans 224 residues: N-(5'-phosphoribosyl)anthranilate isomerase (224 aa).

The protein belongs to the TrpF family.

The catalysed reaction is N-(5-phospho-beta-D-ribosyl)anthranilate = 1-(2-carboxyphenylamino)-1-deoxy-D-ribulose 5-phosphate. The protein operates within amino-acid biosynthesis; L-tryptophan biosynthesis; L-tryptophan from chorismate: step 3/5. This is N-(5'-phosphoribosyl)anthranilate isomerase (TRP1) from Saccharomyces cerevisiae (strain ATCC 204508 / S288c) (Baker's yeast).